The following is a 168-amino-acid chain: 3-dehydroquinate dehydratase (168 aa).

Tyrosine 22 functions as the Proton acceptor in the catalytic mechanism. Substrate is bound by residues asparagine 76, histidine 82, and aspartate 89. Histidine 102 functions as the Proton donor in the catalytic mechanism. Residues 103–104 and arginine 113 each bind substrate; that span reads LT.

The protein belongs to the type-II 3-dehydroquinase family. As to quaternary structure, homododecamer.

It carries out the reaction 3-dehydroquinate = 3-dehydroshikimate + H2O. It functions in the pathway metabolic intermediate biosynthesis; chorismate biosynthesis; chorismate from D-erythrose 4-phosphate and phosphoenolpyruvate: step 3/7. Catalyzes a trans-dehydration via an enolate intermediate. This is 3-dehydroquinate dehydratase from Helicobacter acinonychis (strain Sheeba).